The sequence spans 590 residues: Leucine-rich repeat transmembrane neuronal protein 4 (590 aa).

Positions 1–30 (MGFRLITQLKGMSVLLVLFPTLLLVMLTGA) are cleaved as a signal peptide. The LRRNT domain occupies 31–59 (QRACPKNCRCDGKIVYCESHAFADIPENI). At 31 to 424 (QRACPKNCRC…HEYEHVSFHK (394 aa)) the chain is on the extracellular side. A glycan (N-linked (GlcNAc...) asparagine) is linked at asparagine 58. LRR repeat units lie at residues 60–83 (SGGS…QFAG), 84–107 (LNQL…AFQG), 108–131 (IRRL…TFHP), 132–155 (VPNL…QFKG), 157–179 (RKLI…VFQD), 180–203 (CRNL…AFAG), 205–227 (LKLK…HFPR), 228–251 (LFNL…LTWT), 252–275 (WSSL…TFKC), and 276–299 (LPNL…TVNA). The N-linked (GlcNAc...) asparagine glycan is linked to asparagine 126. Asparagine 291 carries an N-linked (GlcNAc...) asparagine glycan. Residues 311–362 (NMWECSRSICPLFYWLKNFKGNKESTMICAGPKHIQGEKVSDAVETYNICSD) enclose the LRRCT domain. The helical transmembrane segment at 425–445 (IIAGSVALFLSVAMILLVIYV) threads the bilayer. Residues 446–590 (SWKRYPASMK…PAIYLERITN (145 aa)) are Cytoplasmic-facing.

Belongs to the LRRTM family. Peripherally associated with AMPAR complex. AMPAR complex consists of an inner core made of 4 pore-forming GluA/GRIA proteins (GRIA1, GRIA2, GRIA3 and GRIA4) and 4 major auxiliary subunits arranged in a twofold symmetry. One of the two pairs of distinct binding sites is occupied either by CNIH2, CNIH3 or CACNG2, CACNG3. The other harbors CACNG2, CACNG3, CACNG4, CACNG8 or GSG1L. This inner core of AMPAR complex is complemented by outer core constituents binding directly to the GluA/GRIA proteins at sites distinct from the interaction sites of the inner core constituents. Outer core constituents include at least PRRT1, PRRT2, CKAMP44/SHISA9, FRRS1L and NRN1. The proteins of the inner and outer core serve as a platform for other, more peripherally associated AMPAR constituents, including LRRTM4. Alone or in combination, these auxiliary subunits control the gating and pharmacology of the AMPAR complex and profoundly impact their biogenesis and protein processing. In terms of tissue distribution, expressed in the brain (at protein level).

It localises to the cell membrane. The protein localises to the postsynaptic cell membrane. Its function is as follows. May play a role in the development and maintenance of the nervous system. Exhibits strong synaptogenic activity, restricted to excitatory presynaptic differentiation. This Rattus norvegicus (Rat) protein is Leucine-rich repeat transmembrane neuronal protein 4 (Lrrtm4).